Here is a 559-residue protein sequence, read N- to C-terminus: NXPE family member 3 (559 aa).

Residues 1–30 form the signal peptide; that stretch reads MWINFVKLRLFCCLLAVLMVVVLVVNVTQV. Residues Asn-26, Asn-237, and Asn-346 are each glycosylated (N-linked (GlcNAc...) asparagine).

The protein belongs to the NXPE family.

Its subcellular location is the secreted. In Bos taurus (Bovine), this protein is NXPE family member 3 (NXPE3).